The following is a 94-amino-acid chain: Phormicin (94 aa).

Positions 1 to 23 are cleaved as a signal peptide; it reads MKFFMVFVVTFCLAVCFVSQSLA. A propeptide spanning residues 24-54 is cleaved from the precursor; it reads IPADAANDAHFVDGVQALKEIEPELHGRYKR. Intrachain disulfides connect C57-C84, C70-C90, and C74-C92.

It belongs to the invertebrate defensin family. Type 1 subfamily.

It is found in the secreted. In terms of biological role, responsible for the anti Gram-positive activity of immune hemolymph of P.terraenovae. The chain is Phormicin from Protophormia terraenovae (Northern blowfly).